A 510-amino-acid chain; its full sequence is Glycerol kinase (510 aa).

T14 serves as a coordination point for ADP. Residues T14 and T15 each coordinate ATP. T14 provides a ligand contact to sn-glycerol 3-phosphate. R18 contributes to the ADP binding site. Sn-glycerol 3-phosphate contacts are provided by R84, E85, Y136, and D256. Residues R84, E85, Y136, D256, and Q257 each contribute to the glycerol site. T278, G322, G422, and N426 together coordinate ADP. T278, G322, and G422 together coordinate ATP.

Belongs to the FGGY kinase family.

The catalysed reaction is glycerol + ATP = sn-glycerol 3-phosphate + ADP + H(+). It participates in polyol metabolism; glycerol degradation via glycerol kinase pathway; sn-glycerol 3-phosphate from glycerol: step 1/1. Functionally, key enzyme in the regulation of glycerol uptake and metabolism. Catalyzes the phosphorylation of glycerol to yield sn-glycerol 3-phosphate. It also catalyzes the phosphorylation of dihydroxyacetone (DHA). Involved, together with the DHA kinase DhaKLM, in the metabolism of DHA. The chain is Glycerol kinase from Haloferax volcanii (strain ATCC 29605 / DSM 3757 / JCM 8879 / NBRC 14742 / NCIMB 2012 / VKM B-1768 / DS2) (Halobacterium volcanii).